Reading from the N-terminus, the 129-residue chain is Small ribosomal subunit protein uS11 (129 aa).

This sequence belongs to the universal ribosomal protein uS11 family. In terms of assembly, part of the 30S ribosomal subunit. Interacts with proteins S7 and S18. Binds to IF-3.

Functionally, located on the platform of the 30S subunit, it bridges several disparate RNA helices of the 16S rRNA. Forms part of the Shine-Dalgarno cleft in the 70S ribosome. The protein is Small ribosomal subunit protein uS11 of Baumannia cicadellinicola subsp. Homalodisca coagulata.